A 452-amino-acid polypeptide reads, in one-letter code: UPF0210 protein Dred_1672 (452 aa).

Belongs to the UPF0210 family. In terms of assembly, homodimer.

The polypeptide is UPF0210 protein Dred_1672 (Desulforamulus reducens (strain ATCC BAA-1160 / DSM 100696 / MI-1) (Desulfotomaculum reducens)).